The sequence spans 460 residues: Ammonium transporter Rh type B-B (460 aa).

Residues 1 to 10 lie on the Cytoplasmic side of the membrane; that stretch reads MTSYSTNMRI. A helical transmembrane segment spans residues 11 to 31; the sequence is KLPLFCLLLQFITIILFAVFV. Residues 32–62 lie on the Extracellular side of the membrane; that stretch reads RYDHESDARGWHEELNNHSSSNADNDFYYRY. A glycan (N-linked (GlcNAc...) asparagine) is linked at Asn48. The chain crosses the membrane as a helical span at residues 63–83; the sequence is PSFQDVHVMIFIGFGFLMTFL. Topologically, residues 84–87 are cytoplasmic; it reads KRYG. The helical transmembrane segment at 88 to 108 threads the bilayer; that stretch reads FSSVAFNFLIAAFGLQWSTLI. The Extracellular portion of the chain corresponds to 109–125; it reads QGFFHGFHDGKIHVGIE. The chain crosses the membrane as a helical span at residues 126-146; it reads SMINADFCTGAVLISFGAVLG. At 147-150 the chain is on the cytoplasmic side; that stretch reads KTSP. The chain crosses the membrane as a helical span at residues 151–171; that stretch reads VQLIIMTLVEVTLFGINEYII. The Extracellular portion of the chain corresponds to 172 to 179; that stretch reads LNIVGAKD. The helical transmembrane segment at 180–202 threads the bilayer; that stretch reads AGGSMTIHTFGAYFGLIVSRVLY. Topologically, residues 203–220 are cytoplasmic; the sequence is REDLEKSRQREGSVYHSD. Residues 221–241 traverse the membrane as a helical segment; sequence LFAMIGTIYLWMFWPSFNSAV. Over 242 to 252 the chain is Extracellular; the sequence is TAHGDDQHRTV. Residues 253 to 273 form a helical membrane-spanning segment; that stretch reads MNTYYSLAACTLATFGFSALL. At 274–283 the chain is on the cytoplasmic side; the sequence is NGEGKLDMVH. A helical transmembrane segment spans residues 284–304; it reads IQNAALAGGVAVGTSGEMMLT. Pro305 is a topological domain (extracellular). The chain crosses the membrane as a helical span at residues 306-326; that stretch reads FGAMIAGTLAGMISVLGYKYL. At 327-347 the chain is on the cytoplasmic side; sequence TPVLDSKLKIQDTCGVHNLHG. The chain crosses the membrane as a helical span at residues 348–368; that stretch reads MPGILGAIIGAIVALFATADI. Over 369–394 the chain is Extracellular; it reads YGDGMGDVFPLISDGSRTAKQQSLYQ. The chain crosses the membrane as a helical span at residues 395–415; the sequence is FLALLVALGFAIIGGTVVGFI. Residues 416-460 are Cytoplasmic-facing; that stretch reads LKLPIFGTPSDAECFEDAIYWEVPGGEGHQQLTVVINNEDPDTQA.

This sequence belongs to the ammonium transporter (TC 2.A.49) family. Rh subfamily.

Its subcellular location is the basolateral cell membrane. The protein localises to the cytoplasmic vesicle membrane. Functionally, functions as a specific ammonium transporter. The polypeptide is Ammonium transporter Rh type B-B (rhbg-b) (Xenopus laevis (African clawed frog)).